Here is a 417-residue protein sequence, read N- to C-terminus: UDP-N-acetylglucosamine 1-carboxyvinyltransferase (417 aa).

22–23 (KN) lines the phosphoenolpyruvate pocket. Arg92 contacts UDP-N-acetyl-alpha-D-glucosamine. Cys116 serves as the catalytic Proton donor. Cys116 bears the 2-(S-cysteinyl)pyruvic acid O-phosphothioketal mark. Residues Asp304 and Val326 each coordinate UDP-N-acetyl-alpha-D-glucosamine.

This sequence belongs to the EPSP synthase family. MurA subfamily.

It is found in the cytoplasm. It carries out the reaction phosphoenolpyruvate + UDP-N-acetyl-alpha-D-glucosamine = UDP-N-acetyl-3-O-(1-carboxyvinyl)-alpha-D-glucosamine + phosphate. It functions in the pathway cell wall biogenesis; peptidoglycan biosynthesis. Its function is as follows. Cell wall formation. Adds enolpyruvyl to UDP-N-acetylglucosamine. The chain is UDP-N-acetylglucosamine 1-carboxyvinyltransferase from Syntrophotalea carbinolica (strain DSM 2380 / NBRC 103641 / GraBd1) (Pelobacter carbinolicus).